The primary structure comprises 95 residues: FXYD domain-containing ion transport regulator 6 (95 aa).

Residues 1-18 (MEVVLLFLCGLLAPAVLA) form the signal peptide. Residues 19-35 (SATEQEKEKDPFHYDYQ) lie on the Extracellular side of the membrane. A helical membrane pass occupies residues 36-58 (TLRIGGLVFAVVLFSVGILLILS). Topologically, residues 59–95 (RRCKCSFNQKPRAPGDEEAQVENLVTANATEPQKAEN) are cytoplasmic. The tract at residues 69-95 (PRAPGDEEAQVENLVTANATEPQKAEN) is disordered.

The protein belongs to the FXYD family. As to quaternary structure, regulatory subunit of the sodium/potassium-transporting ATPase which is composed of a catalytic alpha subunit, a non-catalytic beta subunit and an additional regulatory subunit. The regulatory subunit, a member of the FXYD protein family, modulates the enzymatic activity in a tissue- and isoform-specific way by changing affinities of the Na+/K+-ATPase toward Na(+), K(+) or ATP.

It localises to the cell membrane. In terms of biological role, associates with and regulates the activity of the sodium/potassium-transporting ATPase (NKA) which catalyzes the hydrolysis of ATP coupled with the exchange of Na(+) and K(+) ions across the plasma membrane. Reduces the apparent affinity for intracellular Na(+) with no change in the apparent affinity for extracellular K(+). In addition to modulating NKA kinetics, may also function as a regulator of NKA localization to the plasma membrane. This is FXYD domain-containing ion transport regulator 6 (FXYD6) from Bos taurus (Bovine).